Consider the following 382-residue polypeptide: Pyrimidine monooxygenase RutA (382 aa).

Residues 68-69 (IK), Asn134, Glu143, 159-160 (RY), and Ser209 contribute to the FMN site.

It belongs to the NtaA/SnaA/DszA monooxygenase family. RutA subfamily.

It carries out the reaction uracil + FMNH2 + NADH + O2 = (Z)-3-ureidoacrylate + FMN + NAD(+) + H2O + H(+). The catalysed reaction is thymine + FMNH2 + NADH + O2 = (Z)-2-methylureidoacrylate + FMN + NAD(+) + H2O + H(+). In terms of biological role, catalyzes the pyrimidine ring opening between N-3 and C-4 by an unusual flavin hydroperoxide-catalyzed mechanism, adding oxygen atoms in the process to yield ureidoacrylate peracid, that immediately reacts with FMN forming ureidoacrylate and FMN-N(5)-oxide. The FMN-N(5)-oxide reacts spontaneously with NADH to produce FMN. Requires the flavin reductase RutF to regenerate FMN in vivo. This is Pyrimidine monooxygenase RutA (rutA) from Escherichia coli O157:H7.